Reading from the N-terminus, the 107-residue chain is UPF0145 protein ESA_02470 (107 aa).

This sequence belongs to the UPF0145 family.

The sequence is that of UPF0145 protein ESA_02470 from Cronobacter sakazakii (strain ATCC BAA-894) (Enterobacter sakazakii).